The following is a 144-amino-acid chain: RxLR effector protein PITG_03192 (144 aa).

The signal sequence occupies residues 1-24 (MRVGFVFALLVVSVIVCFNGLTSA). Positions 49-58 (RNLRASGEER) match the RxLR-dEER motif. N-linked (GlcNAc...) asparagine glycosylation occurs at N115. Residues 122–142 (FFILATLVMFPIGVWAVVTNY) form a helical membrane-spanning segment.

This sequence belongs to the RxLR effector family. Interacts with the C-terminal portions the ER-associated potato NAC transcription factors NTP1 and NTP2.

It is found in the secreted. The protein localises to the host endoplasmic reticulum membrane. Effector that is required for full virulence. Targets host NTP1 and NTP2 transcription factors and prevents their pathogen-associated molecular pattern (PAMP)-triggered re-localization from the endoplasmic reticulum into the nucleus, where they contribute to prevent disease progression by P.infestans. This Phytophthora infestans (strain T30-4) (Potato late blight agent) protein is RxLR effector protein PITG_03192.